A 470-amino-acid polypeptide reads, in one-letter code: Auxin transporter-like protein 3 (470 aa).

Residues 1-57 (MAAEKIETVVAGNYLEMEREEENISGNKKSSTKTKLSNFFWHGGSVYDAWFSCASNQ) lie on the Cytoplasmic side of the membrane. Residues 58-75 (VAQVLLTLPYSFSQLGMM) form a helical membrane-spanning segment. Residues 76 to 77 (SG) are Extracellular-facing. A helical transmembrane segment spans residues 78-98 (ILFQLFYGLMGSWTAYLISVL). The Cytoplasmic segment spans residues 99–134 (YVEYRTRKEREKFDFRNHVIQWFEVLDGLLGKHWRN). The chain crosses the membrane as a helical span at residues 135-155 (LGLIFNCTFLLFGSVIQLIAC). At 156 to 170 (ASNIYYINDKLDKRT) the chain is on the extracellular side. The chain crosses the membrane as a helical span at residues 171–191 (WTYIFGACCATTVFIPSFHNY). Position 192 (arginine 192) is a topological domain, cytoplasmic. Residues 193–213 (IWSFLGLAMTTYTSWYLTIAS) form a helical membrane-spanning segment. Topologically, residues 214-230 (LLHGQAEDVKHSGPTTM) are extracellular. A helical membrane pass occupies residues 231 to 251 (VLYFTGATNILYTFGGHAVTV). Residues 252-264 (EIMHAMWKPQKFK) are Cytoplasmic-facing. Residues 265–285 (AIYLLATIYVLTLTLPSASAV) traverse the membrane as a helical segment. Over 286–312 (YWAFGDKLLTHSNALSLLPKTGFRDTA) the chain is Extracellular. A helical membrane pass occupies residues 313–333 (VILMLIHQFITFGFASTPLYF). The Cytoplasmic segment spans residues 334-354 (VWEKLIGVHETKSMFKRAMAR). A helical membrane pass occupies residues 355 to 375 (LPVVVPIWFLAIIFPFFGPIN). A topological domain (extracellular) is located at residue serine 376. Residues 377–397 (AVGSLLVSFTVYIIPALAHML) traverse the membrane as a helical segment. Over 398-426 (TFAPAPSRENAVERPPRVVGGWMGTYCIN) the chain is Cytoplasmic. A helical membrane pass occupies residues 427-447 (IFVVVWVFVVGFGFGGWASMV). At 448–470 (NFVRQIDTFGLFTKCYQCPPHKP) the chain is on the extracellular side.

The protein belongs to the amino acid/polyamine transporter 2 family. Amino acid/auxin permease (AAAP) (TC 2.A.18.1) subfamily.

It localises to the cell membrane. In terms of biological role, carrier protein involved in proton-driven auxin influx. Mediates the formation of auxin gradient from developing leaves (site of auxin biosynthesis) to tips by contributing to the loading of auxin in vascular tissues and facilitating acropetal (base to tip) auxin transport within inner tissues of the root apex, and basipetal (tip to base) auxin transport within outer tissues of the root apex. In Arabidopsis thaliana (Mouse-ear cress), this protein is Auxin transporter-like protein 3 (LAX3).